The chain runs to 789 residues: DNA topoisomerase 4 subunit A (789 aa).

The Topo IIA-type catalytic domain occupies Leu34–Phe499. The active-site O-(5'-phospho-DNA)-tyrosine intermediate is Tyr122.

It belongs to the type II topoisomerase GyrA/ParC subunit family. ParC type 2 subfamily. As to quaternary structure, heterotetramer composed of ParC and ParE.

The protein resides in the cell membrane. It catalyses the reaction ATP-dependent breakage, passage and rejoining of double-stranded DNA.. Functionally, topoisomerase IV is essential for chromosome segregation. It relaxes supercoiled DNA. Performs the decatenation events required during the replication of a circular DNA molecule. This Mycoplasma pneumoniae (strain ATCC 29342 / M129 / Subtype 1) (Mycoplasmoides pneumoniae) protein is DNA topoisomerase 4 subunit A.